Here is a 778-residue protein sequence, read N- to C-terminus: Tastin (778 aa).

The segment covering 1 to 11 (MTTRQATKDPL) has biased composition (basic and acidic residues). The segment at 1 to 115 (MTTRQATKDP…PGPPAQTEAP (115 aa)) is disordered. Residues serine 16, serine 98, and serine 170 each carry the phosphoserine modification. Residues 212-244 (ISPSGPSFHPSTRPSFQELRRETAGSSRTSVSQ) are disordered. A compositionally biased stretch (polar residues) spans 235 to 244 (AGSSRTSVSQ). Phosphoserine is present on residues serine 324, serine 334, serine 344, and serine 362. Threonine 363 carries the post-translational modification Phosphothreonine. The residue at position 376 (serine 376) is a Phosphoserine. Disordered regions lie at residues 406–425 (EGSG…NRTP), 508–587 (ECGE…AEPR), and 600–641 (PESS…RVEL). The span at 513-523 (QPCPPAEPGPP) shows a compositional bias: pro residues. A run of 4 repeats spans residues 516 to 548 (PPAE…PEPY), 549 to 581 (PPAE…PEPC), 582 to 614 (PPAE…PEPC), and 615 to 647 (PPAE…SEPC). Residues 516–647 (PPAEPGPPEA…RVELGASEPC (132 aa)) are 4 X 33 AA approximate tandem repeats. Basic and acidic residues predominate over residues 560–574 (CRSEPEIPESSRQEQ). Pro residues predominate over residues 612–622 (EPCPPAEPGPL).

Directly binds bystin, and indirectly trophinin. As to expression, strong expression at implantation sites. Was exclusively localized to the apical side of the syncytiotrophoblast. Also found in macrophages.

The protein localises to the cytoplasm. Its function is as follows. Could be involved with bystin and trophinin in a cell adhesion molecule complex that mediates an initial attachment of the blastocyst to uterine epithelial cells at the time of the embryo implantation. In Homo sapiens (Human), this protein is Tastin (TROAP).